The chain runs to 320 residues: Protease HtpX homolog (320 aa).

Transmembrane regions (helical) follow at residues 6 to 26 (TAML…LIGG) and 28 to 48 (AGMM…YWNS). Histidine 130 provides a ligand contact to Zn(2+). Residue glutamate 131 is part of the active site. Residue histidine 134 coordinates Zn(2+). 2 helical membrane-spanning segments follow: residues 145-165 (ITAT…FFGG) and 173-193 (PLGF…AMLV). A Zn(2+)-binding site is contributed by glutamate 202. A disordered region spans residues 283–320 (MNVSTSPARAANPSRKSRSVPDTGLGRGGSQPPKGPWS).

This sequence belongs to the peptidase M48B family. It depends on Zn(2+) as a cofactor.

The protein localises to the cell inner membrane. The chain is Protease HtpX homolog from Rhizobium johnstonii (strain DSM 114642 / LMG 32736 / 3841) (Rhizobium leguminosarum bv. viciae).